A 255-amino-acid chain; its full sequence is Tachylectin-2 (255 aa).

Residues methionine 1 to threonine 19 form the signal peptide. WD repeat units follow at residues valine 20 to leucine 67, serine 68 to phenylalanine 114, aspartate 115 to phenylalanine 161, histidine 162 to phenylalanine 208, and serine 209 to phenylalanine 255.

As to quaternary structure, monomer.

Its subcellular location is the secreted. The protein resides in the cytoplasmic granule. Its function is as follows. Lectin that binds specifically to N-acetylglucosamine and N-acetylgalactosamine. Is part of the innate immunity host defense system of the horseshoe crab. The sequence is that of Tachylectin-2 from Tachypleus tridentatus (Japanese horseshoe crab).